We begin with the raw amino-acid sequence, 186 residues long: MPDGIDFKDLHRRFDGAIAAFKHDIASLRTGRASANLLDPIHVDAYGASMPVNQVATVSVPEPRMISVSVWDQSLVGAVDRAIREANLGFNPIVEGSTLRIPLPELNEERRKELVKIAHQYAEHARVAARHVRRDGMEHLKKAEKDGEISQDEARVQSDRVQKMTDETIAAIDKLLAEKEVEILQV.

Belongs to the RRF family.

The protein localises to the cytoplasm. Its function is as follows. Responsible for the release of ribosomes from messenger RNA at the termination of protein biosynthesis. May increase the efficiency of translation by recycling ribosomes from one round of translation to another. The protein is Ribosome-recycling factor of Chelativorans sp. (strain BNC1).